We begin with the raw amino-acid sequence, 276 residues long: NADPH-dependent 7-cyano-7-deazaguanine reductase (276 aa).

83–85 (IES) provides a ligand contact to substrate. An NADPH-binding site is contributed by 85–86 (SK). Cys-184 acts as the Thioimide intermediate in catalysis. Residue Asp-191 is the Proton donor of the active site. Substrate is bound at residue 223–224 (HE). An NADPH-binding site is contributed by 252-253 (RG).

It belongs to the GTP cyclohydrolase I family. QueF type 2 subfamily. As to quaternary structure, homodimer.

It localises to the cytoplasm. The enzyme catalyses 7-aminomethyl-7-carbaguanine + 2 NADP(+) = 7-cyano-7-deazaguanine + 2 NADPH + 3 H(+). It functions in the pathway tRNA modification; tRNA-queuosine biosynthesis. Catalyzes the NADPH-dependent reduction of 7-cyano-7-deazaguanine (preQ0) to 7-aminomethyl-7-deazaguanine (preQ1). In Pseudomonas putida (strain ATCC 700007 / DSM 6899 / JCM 31910 / BCRC 17059 / LMG 24140 / F1), this protein is NADPH-dependent 7-cyano-7-deazaguanine reductase.